Here is a 341-residue protein sequence, read N- to C-terminus: tRNA N6-adenosine threonylcarbamoyltransferase (341 aa).

2 residues coordinate Fe cation: H115 and H119. Substrate is bound by residues 138 to 142 (LVSGG), D171, G184, and N276. Fe cation is bound at residue D304.

The protein belongs to the KAE1 / TsaD family. Requires Fe(2+) as cofactor.

It is found in the cytoplasm. It catalyses the reaction L-threonylcarbamoyladenylate + adenosine(37) in tRNA = N(6)-L-threonylcarbamoyladenosine(37) in tRNA + AMP + H(+). In terms of biological role, required for the formation of a threonylcarbamoyl group on adenosine at position 37 (t(6)A37) in tRNAs that read codons beginning with adenine. Is involved in the transfer of the threonylcarbamoyl moiety of threonylcarbamoyl-AMP (TC-AMP) to the N6 group of A37, together with TsaE and TsaB. TsaD likely plays a direct catalytic role in this reaction. The chain is tRNA N6-adenosine threonylcarbamoyltransferase from Stenotrophomonas maltophilia (strain R551-3).